Reading from the N-terminus, the 177-residue chain is Putative adenylate kinase (177 aa).

ATP is bound by residues Gly-10, Gly-12, Lys-13, Thr-14, and Thr-15. The NMP stretch occupies residues 30 to 53; sequence DITEAVKKYKLYTEKDEDMDSYVI. The tract at residues 103–113 is LID; the sequence is KRGYKPKKVLE. Arg-104 lines the ATP pocket.

Belongs to the adenylate kinase family. AK6 subfamily. In terms of assembly, interacts with uS11. Not a structural component of 40S pre-ribosomes, but transiently interacts with them by binding to uS11.

The catalysed reaction is AMP + ATP = 2 ADP. It catalyses the reaction ATP + H2O = ADP + phosphate + H(+). Its function is as follows. Broad-specificity nucleoside monophosphate (NMP) kinase that catalyzes the reversible transfer of the terminal phosphate group between nucleoside triphosphates and monophosphates. Also has ATPase activity. Involved in the late maturation steps of the 30S ribosomal particles, specifically 16S rRNA maturation. While NMP activity is not required for ribosome maturation, ATPase activity is. Associates transiently with small ribosomal subunit protein uS11. ATP hydrolysis breaks the interaction with uS11. May temporarily remove uS11 from the ribosome to enable a conformational change of the ribosomal RNA that is needed for the final maturation step of the small ribosomal subunit. The chain is Putative adenylate kinase from Methanocaldococcus jannaschii (strain ATCC 43067 / DSM 2661 / JAL-1 / JCM 10045 / NBRC 100440) (Methanococcus jannaschii).